Here is an 867-residue protein sequence, read N- to C-terminus: Leucine--tRNA ligase (867 aa).

Residues 42–52 carry the 'HIGH' region motif; sequence PYPSGNLHMGH. A 'KMSKS' region motif is present at residues 625-629; it reads KMSKS. Position 628 (Lys-628) interacts with ATP.

This sequence belongs to the class-I aminoacyl-tRNA synthetase family.

It localises to the cytoplasm. The catalysed reaction is tRNA(Leu) + L-leucine + ATP = L-leucyl-tRNA(Leu) + AMP + diphosphate. This chain is Leucine--tRNA ligase, found in Blochmanniella floridana.